The following is a 434-amino-acid chain: Eukaryotic peptide chain release factor subunit 1-1 (434 aa).

Belongs to the eukaryotic release factor 1 family. As to quaternary structure, heterodimer of two subunits, one of which binds GTP.

It is found in the cytoplasm. In terms of biological role, directs the termination of nascent peptide synthesis (translation) in response to the termination codons UAA, UAG and UGA. Modulates plant growth and development. The polypeptide is Eukaryotic peptide chain release factor subunit 1-1 (Brassica oleracea var. botrytis (Cauliflower)).